We begin with the raw amino-acid sequence, 603 residues long: Nuclear receptor subfamily 2 group C member 1 (603 aa).

Positions 1 to 178 are required for interaction with KAT2B; that stretch reads MATIEEIAHQ…RLQRCIAFGM (178 aa). Residues 110–185 constitute a DNA-binding region (nuclear receptor); it reads FDLCVVCGDK…FGMKQDSVQC (76 aa). 2 NR C4-type zinc fingers span residues 113-133 and 149-173; these read CVVCGDKASGRHYGAVTCEGC and CRGSKDCIINKHHRNRCQYCRLQRC. Phosphoserine is present on residues S197 and S215. The residue at position 220 (T220) is a Phosphothreonine. T222 carries the post-translational modification Phosphothreonine; by MAPK1. K250 is covalently cross-linked (Glycyl lysine isopeptide (Lys-Gly) (interchain with G-Cter in SUMO2)). The NR LBD domain occupies 348–590; sequence GSVHLITGDS…SVIPHILKME (243 aa). Position 581 is a phosphoserine; by PKC (S581). Residues 584 to 603 form a required for interaction with NRIP1 region; sequence PHILKMEPADYNSQIIGHSI. A Glycyl lysine isopeptide (Lys-Gly) (interchain with G-Cter in SUMO2) cross-link involves residue K588.

This sequence belongs to the nuclear hormone receptor family. NR2 subfamily. As to quaternary structure, homodimer. Heterodimer; binds DNA as a heterodimer with NR2C2 required for chromatin remodeling and for binding to promoter regions such as globin DR1 repeats. Interacts with NRIP1 (via its LXXLL motifs); the interaction provides corepressor activity. Interacts with HDAC3 (via the DNA-binding domain). Interacts with HDAC4 (via the DNA-binding domain). Interacts with PIAS1; the interaction is required for sumoylation of NR2C1. Interacts with UBE2I; the interaction is required for sumoylation of NR2C1. Interacts with KAT2B; the interaction acts as a corepressor of gene expression. Interacts with ESR1; the interaction prevents homodimerization of ESR1 and suppresses its transcriptional activity and cell growth. In terms of processing, sumoylation requires both PIAS1 and UBE2I. Sumoylation appears to dissociate NR2C1 from the PML nuclear bodies. Enhances the interaction with NRIP1 but inhibits interaction with KAT2B. In proliferating cells, stimulation by all-trans retinoic acid, activation of MAPK1-mediated phosphorylation and recruitment to PML bodies with subsequent sumoylation, suppresses OCT4 expression. Post-translationally, phosphorylated on several serine and threonine residues. Phosphorylation on Thr-222, stimulated by all-trans retinoic acid (atRA) mediates PML location and sumoylation in proliferating cells which then modulates its association with effector molecules, KAT2B and NRIP1. Phosphorylation on Ser-581 by PKC is important for protein stability and function as activator of RARB.

Its subcellular location is the nucleus. The protein resides in the PML body. Its function is as follows. Orphan nuclear receptor. Binds the IR7 element in the promoter of its own gene in an autoregulatory negative feedback mechanism. Primarily repressor of a broad range of genes. Binds to hormone response elements (HREs) consisting of two 5'-AGGTCA-3' half site direct repeat consensus sequences. Together with NR2C2, forms the core of the DRED (direct repeat erythroid-definitive) complex that represses embryonic and fetal globin transcription. Also activator of OCT4 gene expression. May be involved in stem cell proliferation and differentiation. Mediator of retinoic acid-regulated preadipocyte proliferation. The sequence is that of Nuclear receptor subfamily 2 group C member 1 (NR2C1) from Homo sapiens (Human).